Consider the following 80-residue polypeptide: Metallothionein-like protein type 2, MT2-4/MT2-25 (80 aa).

Belongs to the metallothionein superfamily. Type 15 family.

Functionally, metallothioneins have a high content of cysteine residues that bind various heavy metals. This Brassica juncea (Indian mustard) protein is Metallothionein-like protein type 2, MT2-4/MT2-25.